A 618-amino-acid chain; its full sequence is uncharacterized protein (618 aa).

A disordered region spans residues 1 to 45; that stretch reads MSSKSASKLKREAKKAERLAAKGESVKPSKKNGTKNGKDKEVDGV. Composition is skewed to basic and acidic residues over residues 14–27 and 36–45; these read KKAERLAAKGESVK and NGKDKEVDGV. 2 positions are modified to phosphoserine: Ser50 and Ser53. Thr54 is modified (phosphothreonine). Phosphoserine occurs at positions 55 and 64. 2 ABC transporter domains span residues 76–325 and 388–609; these read IKID…LKQQ and IAFN…QSRD. ATP-binding positions include 108–115 and 423–430; these read GDNGSGKS and GKNGTGKS.

The protein belongs to the ABC transporter superfamily.

The protein resides in the cytoplasm. This is an uncharacterized protein from Schizosaccharomyces pombe (strain 972 / ATCC 24843) (Fission yeast).